Here is a 396-residue protein sequence, read N- to C-terminus: Flavohemoprotein (396 aa).

In terms of domain architecture, Globin spans 1–136; it reads MLDNQTIATV…LADIFINREE (136 aa). H85 provides a ligand contact to heme b. Active-site charge relay system residues include Y95 and E135. Positions 147–396 are reductase; it reads GGWRGLRPFR…YECFGPHKVI (250 aa). The FAD-binding FR-type domain maps to 150 to 255; the sequence is RGLRPFRINR…TAPRGDFFLD (106 aa). Residues Y188 and 204–207 contribute to the FAD site; that span reads RQYS. 268-273 contributes to the NADP(+) binding site; the sequence is GVGLTP. Residue 389–392 coordinates FAD; the sequence is CFGP.

The protein belongs to the globin family. Two-domain flavohemoproteins subfamily. It in the C-terminal section; belongs to the flavoprotein pyridine nucleotide cytochrome reductase family. The cofactor is heme b. It depends on FAD as a cofactor.

The enzyme catalyses 2 nitric oxide + NADPH + 2 O2 = 2 nitrate + NADP(+) + H(+). It carries out the reaction 2 nitric oxide + NADH + 2 O2 = 2 nitrate + NAD(+) + H(+). Its function is as follows. Is involved in NO detoxification in an aerobic process, termed nitric oxide dioxygenase (NOD) reaction that utilizes O(2) and NAD(P)H to convert NO to nitrate, which protects the bacterium from various noxious nitrogen compounds. Therefore, plays a central role in the inducible response to nitrosative stress. The chain is Flavohemoprotein from Photorhabdus laumondii subsp. laumondii (strain DSM 15139 / CIP 105565 / TT01) (Photorhabdus luminescens subsp. laumondii).